The following is a 155-amino-acid chain: Large ribosomal subunit protein uL11 (155 aa).

Belongs to the universal ribosomal protein uL11 family. As to quaternary structure, part of the ribosomal stalk of the 50S ribosomal subunit. Interacts with L10 and the large rRNA to form the base of the stalk. L10 forms an elongated spine to which L12 dimers bind in a sequential fashion forming a multimeric L10(L12)X complex. In terms of processing, one or more lysine residues are methylated.

In terms of biological role, forms part of the ribosomal stalk which helps the ribosome interact with GTP-bound translation factors. This Malacoplasma penetrans (strain HF-2) (Mycoplasma penetrans) protein is Large ribosomal subunit protein uL11.